The sequence spans 737 residues: MRSLIRSGALNAFLAASLATGQVLTWDEAYTKATSDLSLLSQEEKVGIVTGVTWQGGPCVGNTYEPTSIPYPSLCLQDGPLSVRFANPVTVFPAGINAGATWDRELIRARGVAMGAESRGLGVHVQLGPVAGALGKIPSAGRNWEGFSNDPYLAGIAMAEAIQGMQSSGVQACAKHYLLNEQEYNRDTISSNADDRTIHELYLWPFYDAVKANVASVMCSYNKINGTWACEHDALLNGLLKGELGFKGHVLSDWNAQHSTVQSANTGLDMTMPGSDFSTPPGSIYWGDNLAAAIADGSVPQERLDDMVTRILAAWYLVGQDQGHPPVAFSSWDGGAASVNVTTPEHGELARTIARDSIVLLKNTNGSLPLAKPASLAVIGSDAIVNPDGANACADRGCNKGTLAQGWGSGTAEFPYLVAPLDAIEEKLAGAGTAIITSTTDDATSGAEAAAAAETAIVFITSDSGEGYITVEGHEGDRNNLDPWHNGNLLVQAVARTNTPTIVVLHSVGPVTLETILAEPNVVAVVWAGLPGQESGHALTDVLFGDYAPSGKLPFTIGKSEEDYGADWTTSQVDDFAEGLFIDYRHFDQYGIEPRYEFGFGLSYTSFNYSTLSTSISTTPGPTTGETIVGGPSDLFAPIGTVSAYVANTGHVAGAEVVQLYIGYPDSAPSIPPKQLRGFDKLHLVPGESGIATFELTRRDISYWDVGLQKWVVASGTFEVFVGASSRDIRLTGSFTV.

The N-terminal stretch at 1 to 19 (MRSLIRSGALNAFLAASLA) is a signal peptide. Residue Asn-225 is glycosylated (N-linked (GlcNAc...) asparagine). Asp-253 is a catalytic residue. Asn-340, Asn-365, and Asn-608 each carry an N-linked (GlcNAc...) asparagine glycan.

It belongs to the glycosyl hydrolase 3 family.

It is found in the secreted. The enzyme catalyses Hydrolysis of terminal, non-reducing beta-D-glucosyl residues with release of beta-D-glucose.. Its pathway is glycan metabolism; cellulose degradation. Functionally, beta-glucosidases are one of a number of cellulolytic enzymes involved in the degradation of cellulosic biomass. Catalyzes the last step releasing glucose from the inhibitory cellobiose. The polypeptide is Probable beta-glucosidase L (bglL) (Emericella nidulans (strain FGSC A4 / ATCC 38163 / CBS 112.46 / NRRL 194 / M139) (Aspergillus nidulans)).